Consider the following 190-residue polypeptide: Transmembrane protein 11, mitochondrial (190 aa).

Transmembrane regions (helical) follow at residues Val-84–Asp-100 and Leu-107–Trp-124.

It belongs to the TMEM11 family. In terms of assembly, associates with the mitochondrial contact site and cristae organizing system (MICOS) complex, composed of at least MICOS10/MIC10, CHCHD3/MIC19, CHCHD6/MIC25, APOOL/MIC27, IMMT/MIC60, APOO/MIC23/MIC26 and QIL1/MIC13. This complex was also known under the names MINOS or MitOS complex. The MICOS complex associates with mitochondrial outer membrane proteins SAMM50, MTX1, MTX2 and DNAJC11, mitochondrial inner membrane protein TMEM11 and with HSPA9. Interacts with IMMT/MIC60.

Its subcellular location is the mitochondrion inner membrane. Plays a role in mitochondrial morphogenesis. This chain is Transmembrane protein 11, mitochondrial (Tmem11), found in Mus musculus (Mouse).